The sequence spans 989 residues: Phosphoenolpyruvate carboxylase (989 aa).

Active-site residues include His175 and Lys630.

This sequence belongs to the PEPCase type 1 family. The cofactor is Mg(2+).

It catalyses the reaction oxaloacetate + phosphate = phosphoenolpyruvate + hydrogencarbonate. Forms oxaloacetate, a four-carbon dicarboxylic acid source for the tricarboxylic acid cycle. The chain is Phosphoenolpyruvate carboxylase from Prochlorococcus marinus (strain MIT 9515).